Here is a 309-residue protein sequence, read N- to C-terminus: ESX-3 secretion system protein EccE3 (309 aa).

A run of 2 helical transmembrane segments spans residues 5-25 (IALA…QTTT) and 29-49 (VLGV…GMFL).

It belongs to the EccE family. Part of the ESX-3 / type VII secretion system (T7SS), which is composed of cytosolic and membrane components. The ESX-3 membrane complex is composed of EccB3, EccC3, EccD3 and EccE3.

The protein localises to the cell inner membrane. Its function is as follows. Part of the ESX-3 specialized secretion system, which is required for siderophore-mediated iron acquisition and for the secretion of EsxH and EsxG. The chain is ESX-3 secretion system protein EccE3 from Mycolicibacterium smegmatis (strain ATCC 700084 / mc(2)155) (Mycobacterium smegmatis).